The following is a 159-amino-acid chain: Phosphopantetheine adenylyltransferase (159 aa).

Thr9 contributes to the substrate binding site. Residues 9–10 (TF) and His17 each bind ATP. Positions 41, 73, and 87 each coordinate substrate. ATP contacts are provided by residues 88 to 90 (GLR), Glu98, and 123 to 129 (YAFLSST).

The protein belongs to the bacterial CoaD family. In terms of assembly, homohexamer. The cofactor is Mg(2+).

The protein localises to the cytoplasm. The catalysed reaction is (R)-4'-phosphopantetheine + ATP + H(+) = 3'-dephospho-CoA + diphosphate. It functions in the pathway cofactor biosynthesis; coenzyme A biosynthesis; CoA from (R)-pantothenate: step 4/5. Its function is as follows. Reversibly transfers an adenylyl group from ATP to 4'-phosphopantetheine, yielding dephospho-CoA (dPCoA) and pyrophosphate. The polypeptide is Phosphopantetheine adenylyltransferase (Vibrio campbellii (strain ATCC BAA-1116)).